A 395-amino-acid chain; its full sequence is Elongation factor Tu (395 aa).

The 195-residue stretch at 10-204 (KPHVNIGTIG…AVDSYIPTPQ (195 aa)) folds into the tr-type G domain. The tract at residues 19 to 26 (GHVDHGKT) is G1. Residue 19 to 26 (GHVDHGKT) participates in GTP binding. Position 26 (Thr-26) interacts with Mg(2+). Residues 60–64 (GITIN) are G2. The interval 81-84 (DCPG) is G3. Residues 81–85 (DCPGH) and 136–139 (NKCD) each bind GTP. The interval 136 to 139 (NKCD) is G4. Residues 174–176 (SAL) form a G5 region.

Belongs to the TRAFAC class translation factor GTPase superfamily. Classic translation factor GTPase family. EF-Tu/EF-1A subfamily. In terms of assembly, monomer.

Its subcellular location is the cytoplasm. The enzyme catalyses GTP + H2O = GDP + phosphate + H(+). Its function is as follows. GTP hydrolase that promotes the GTP-dependent binding of aminoacyl-tRNA to the A-site of ribosomes during protein biosynthesis. The protein is Elongation factor Tu of Symbiobacterium thermophilum (strain DSM 24528 / JCM 14929 / IAM 14863 / T).